A 346-amino-acid chain; its full sequence is Putative agmatine deiminase (346 aa).

The active-site Amidino-cysteine intermediate is Cys-338.

The protein belongs to the agmatine deiminase family.

It carries out the reaction agmatine + H2O = N-carbamoylputrescine + NH4(+). This chain is Putative agmatine deiminase, found in Streptomyces avermitilis (strain ATCC 31267 / DSM 46492 / JCM 5070 / NBRC 14893 / NCIMB 12804 / NRRL 8165 / MA-4680).